The sequence spans 62 residues: MAKVCYFTGRKTVSGNNRSHAMNQTKRTVKPNLQKVTVLIDGKPKKVWVSARALKSGKVERV.

Belongs to the bacterial ribosomal protein bL28 family.

In Streptococcus agalactiae serotype Ia (strain ATCC 27591 / A909 / CDC SS700), this protein is Large ribosomal subunit protein bL28.